The following is an 883-amino-acid chain: Protein argonaute 16 (883 aa).

The PAZ domain maps to 254-366 (PVFDFLLTNQ…VPIELCHMVS (113 aa)). In terms of domain architecture, Piwi spans 535–844 (FLLCVLPERK…AAAQMGQFMK (310 aa)).

This sequence belongs to the argonaute family. Ago subfamily.

Functionally, probably involved in the RNA silencing pathway. May bind to short RNAs such as microRNAs (miRNAs) or short interfering RNAs (siRNAs), and represses the translation of mRNAs which are complementary to them. In Oryza sativa subsp. japonica (Rice), this protein is Protein argonaute 16 (AGO16).